We begin with the raw amino-acid sequence, 432 residues long: D-amino acid dehydrogenase (432 aa).

Residue 3–17 participates in FAD binding; sequence VLVLGSGVIGTASAY.

The protein belongs to the DadA oxidoreductase family. The cofactor is FAD.

The enzyme catalyses a D-alpha-amino acid + A + H2O = a 2-oxocarboxylate + AH2 + NH4(+). It participates in amino-acid degradation; D-alanine degradation; NH(3) and pyruvate from D-alanine: step 1/1. Functionally, oxidative deamination of D-amino acids. The chain is D-amino acid dehydrogenase from Ectopseudomonas mendocina (strain ymp) (Pseudomonas mendocina).